Here is a 132-residue protein sequence, read N- to C-terminus: Small ribosomal subunit protein uS8 (132 aa).

Belongs to the universal ribosomal protein uS8 family. Part of the 30S ribosomal subunit. Contacts proteins S5 and S12.

Its function is as follows. One of the primary rRNA binding proteins, it binds directly to 16S rRNA central domain where it helps coordinate assembly of the platform of the 30S subunit. The polypeptide is Small ribosomal subunit protein uS8 (Geobacillus sp. (strain WCH70)).